A 561-amino-acid chain; its full sequence is Formate--tetrahydrofolate ligase (561 aa).

ATP is bound at residue 66–73; that stretch reads TPAGEGKT.

It belongs to the formate--tetrahydrofolate ligase family.

The enzyme catalyses (6S)-5,6,7,8-tetrahydrofolate + formate + ATP = (6R)-10-formyltetrahydrofolate + ADP + phosphate. It participates in one-carbon metabolism; tetrahydrofolate interconversion. The protein is Formate--tetrahydrofolate ligase of Methylibium petroleiphilum (strain ATCC BAA-1232 / LMG 22953 / PM1).